The following is a 168-amino-acid chain: Endoribonuclease YbeY (168 aa).

Zn(2+)-binding residues include His123, His127, and His133.

Belongs to the endoribonuclease YbeY family. The cofactor is Zn(2+).

The protein localises to the cytoplasm. Single strand-specific metallo-endoribonuclease involved in late-stage 70S ribosome quality control and in maturation of the 3' terminus of the 16S rRNA. The sequence is that of Endoribonuclease YbeY from Francisella tularensis subsp. holarctica (strain LVS).